The chain runs to 1043 residues: Peroxisomal ATPase PEX1 (1043 aa).

Residues 453–626 (ATPAIILDGK…SKNQIMKLNR (174 aa)) are AAA-cassette D1. Residues 461–468 (GKQGIGKT) and 738–745 (GYPGCGKT) each bind ATP. The segment at 733 to 926 (GILLYGYPGC…CYNAYLKSVH (194 aa)) is AAA-cassette D2.

Belongs to the AAA ATPase family. Interacts with PEX6; forming the PEX1-PEX6 AAA ATPase complex, which is composed of a heterohexamer formed by a trimer of PEX1-PEX6 dimers. The PEX1-PEX6 heterooligomers associate with the peroxisomal importomer via interaction of PEX6 with the peroxisomal membrane anchor PEX15.

It localises to the cytoplasm. Its subcellular location is the cytosol. It is found in the peroxisome membrane. It catalyses the reaction ATP + H2O = ADP + phosphate + H(+). Its function is as follows. Component of the PEX1-PEX6 AAA ATPase complex, a protein dislocase complex that mediates the ATP-dependent extraction of the PEX5 receptor from peroxisomal membranes, an essential step for PEX5 recycling. Specifically recognizes PEX5 monoubiquitinated at 'Cys-6', and pulls it out of the peroxisome lumen through the PEX2-PEX10-PEX12 retrotranslocation channel. Extraction by the PEX1-PEX6 AAA ATPase complex is accompanied by unfolding of the TPR repeats and release of bound cargo from PEX5. The sequence is that of Peroxisomal ATPase PEX1 from Saccharomyces cerevisiae (strain ATCC 204508 / S288c) (Baker's yeast).